The following is a 262-amino-acid chain: Adenosylcobinamide-GDP ribazoletransferase (262 aa).

The next 6 helical transmembrane spans lie at 43 to 63, 66 to 86, 120 to 140, 146 to 166, 191 to 211, and 242 to 262; these read YFGLVGLLIGLLSAIVFWLTQ, LPAGVSVLLAMLVGVLLTGGF, GAIALILALLLKWQLLVELAL, AGSALIVAHTVSRVVAASIIF, LFILVASGVLVLLFLKGLAAL, and AAQQICEIVCYLVLLIVGSIL.

This sequence belongs to the CobS family. Requires Mg(2+) as cofactor.

The protein resides in the cell inner membrane. It catalyses the reaction alpha-ribazole + adenosylcob(III)inamide-GDP = adenosylcob(III)alamin + GMP + H(+). The catalysed reaction is alpha-ribazole 5'-phosphate + adenosylcob(III)inamide-GDP = adenosylcob(III)alamin 5'-phosphate + GMP + H(+). It participates in cofactor biosynthesis; adenosylcobalamin biosynthesis; adenosylcobalamin from cob(II)yrinate a,c-diamide: step 7/7. Its function is as follows. Joins adenosylcobinamide-GDP and alpha-ribazole to generate adenosylcobalamin (Ado-cobalamin). Also synthesizes adenosylcobalamin 5'-phosphate from adenosylcobinamide-GDP and alpha-ribazole 5'-phosphate. The chain is Adenosylcobinamide-GDP ribazoletransferase from Shewanella putrefaciens (strain CN-32 / ATCC BAA-453).